The chain runs to 515 residues: Spermatogenesis-associated protein 2 (515 aa).

A PUB domain is found at 78–150; it reads ALHCAFSMLE…VYKLKELVES (73 aa). The PIM motif signature appears at 321–338; it reads TYFSTQDDVDLYTDSEPR. Residues 429 to 452 are disordered; sequence GHQTQGLDRLAPVHSKPKPSTTAT.

Belongs to the SPATA2 family. As to quaternary structure, interacts (via the PIM motif) with RNF31/HOIP (via the PUB domain); the interaction is direct. Interacts (via the PUB domain) with CYLD; the interaction is direct. In terms of tissue distribution, widely expressed, with highest expression in testis, lung and intestine, and lower expression in brain, heart and spleen. Present at high level in Sertoli cells: expressed from stage I to stage XII of the testis seminiferous epithelium (at protein level).

The protein resides in the cytoplasm. Its subcellular location is the nucleus. In terms of biological role, bridging factor that mediates the recruitment of CYLD to the LUBAC complex, thereby regulating TNF-alpha-induced necroptosis. Acts as a direct binding intermediate that bridges RNF31/HOIP, the catalytic subunit of the LUBAC complex, and the deubiquitinase (CYLD), thereby recruiting CYLD to the TNF-R1 signaling complex (TNF-RSC). Required to activate the 'Met-1'- (linear) and 'Lys-63'-linked deubiquitinase activities of CYLD. Controls the kinase activity of RIPK1 and TNF-alpha-induced necroptosis by promoting 'Met-1'-linked deubiquitination of RIPK1 by CYLD. The polypeptide is Spermatogenesis-associated protein 2 (Mus musculus (Mouse)).